We begin with the raw amino-acid sequence, 271 residues long: Eukaryotic translation initiation factor 2 subunit beta (271 aa).

A C4-type zinc finger spans residues 223 to 247; it reads CLGCQSPDTILSKENRLFFLRCEKC.

This sequence belongs to the eIF-2-beta/eIF-5 family. Eukaryotic translation initiation factor 2 eIF2 is a heterotrimeric complex composed of an alpha, a beta and a gamma subunit.

It localises to the cytoplasm. The protein localises to the cytosol. Component of the eIF2 complex that functions in the early steps of protein synthesis by forming a ternary complex with GTP and initiator tRNA. This complex binds to a 40S ribosomal subunit, followed by mRNA binding to form a 43S pre-initiation complex (43S PIC). Junction of the 60S ribosomal subunit to form the 80S initiation complex is preceded by hydrolysis of the GTP bound to eIF2 and release of an eIF2-GDP binary complex. In order for eIF2 to recycle and catalyze another round of initiation, the GDP bound to eIF2 must exchange with GTP by way of a reaction catalyzed by eIF2B. This chain is Eukaryotic translation initiation factor 2 subunit beta, found in Malus domestica (Apple).